A 196-amino-acid polypeptide reads, in one-letter code: Peptidyl-tRNA hydrolase (196 aa).

Tyr18 contributes to the tRNA binding site. Catalysis depends on His23, which acts as the Proton acceptor. TRNA is bound by residues Phe69, Asn71, and Asn117.

This sequence belongs to the PTH family. In terms of assembly, monomer.

The protein localises to the cytoplasm. It carries out the reaction an N-acyl-L-alpha-aminoacyl-tRNA + H2O = an N-acyl-L-amino acid + a tRNA + H(+). Its function is as follows. Hydrolyzes ribosome-free peptidyl-tRNAs (with 1 or more amino acids incorporated), which drop off the ribosome during protein synthesis, or as a result of ribosome stalling. Functionally, catalyzes the release of premature peptidyl moieties from peptidyl-tRNA molecules trapped in stalled 50S ribosomal subunits, and thus maintains levels of free tRNAs and 50S ribosomes. The chain is Peptidyl-tRNA hydrolase from Aliivibrio salmonicida (strain LFI1238) (Vibrio salmonicida (strain LFI1238)).